Here is a 416-residue protein sequence, read N- to C-terminus: Histidinol dehydrogenase (416 aa).

Tyrosine 117, glutamine 178, and asparagine 201 together coordinate NAD(+). Positions 224, 246, and 249 each coordinate substrate. Zn(2+) contacts are provided by glutamine 246 and histidine 249. Active-site proton acceptor residues include glutamate 314 and histidine 315. Substrate contacts are provided by histidine 315, aspartate 348, glutamate 402, and histidine 407. Aspartate 348 serves as a coordination point for Zn(2+). Histidine 407 contacts Zn(2+).

The protein belongs to the histidinol dehydrogenase family. Requires Zn(2+) as cofactor.

The enzyme catalyses L-histidinol + 2 NAD(+) + H2O = L-histidine + 2 NADH + 3 H(+). Its pathway is amino-acid biosynthesis; L-histidine biosynthesis; L-histidine from 5-phospho-alpha-D-ribose 1-diphosphate: step 9/9. In terms of biological role, catalyzes the sequential NAD-dependent oxidations of L-histidinol to L-histidinaldehyde and then to L-histidine. The polypeptide is Histidinol dehydrogenase (Staphylococcus aureus (strain Mu50 / ATCC 700699)).